Consider the following 382-residue polypeptide: Mannosyl phosphorylinositol ceramide synthase SUR1 (382 aa).

At 1–6 (MRKELK) the chain is on the cytoplasmic side. The chain crosses the membrane as a helical span at residues 7–27 (YLICFNILLLLSIIYYTFDLL). At 28–269 (TLCIDDTVKD…KALENHILSC (242 aa)) the chain is on the extracellular side. The helical transmembrane segment at 270–290 (VVTGFIFGFFILYGEFTFYCW) threads the bilayer. The Cytoplasmic segment spans residues 291 to 382 (LCSKNFSNLT…SKYSLGNNSS (92 aa)). S349 bears the Phosphoserine mark.

It belongs to the glycosyltransferase 32 family. Heterodimer of SUR1 and CSG2.

It localises to the membrane. It carries out the reaction a 1D-myo-inositol-1-phospho-N-[(R)-2-hydroxy-very-long-chain fatty acyl]-(R)-4-hydroxysphingoid base + GDP-alpha-D-mannose = an alpha-D-mannosyl-(1&lt;-&gt;6)-1D-myo-inositol-1-phospho-N-[(R)-2-hydroxy-very-long-chain fatty acyl]-(R)-4-hydroxysphingoid base + GDP + H(+). In terms of biological role, involved in the synthesis of mannosyl phosphorylinositol ceramide. Catalyzes the addition of mannosyl to phosphorylinositol ceramide. Suppressor of RVS161 mutation. The chain is Mannosyl phosphorylinositol ceramide synthase SUR1 from Saccharomyces cerevisiae (strain ATCC 204508 / S288c) (Baker's yeast).